Consider the following 303-residue polypeptide: tRNA pseudouridine synthase A (303 aa).

Asp-59 functions as the Nucleophile in the catalytic mechanism. Residue Tyr-128 coordinates substrate.

The protein belongs to the tRNA pseudouridine synthase TruA family. Homodimer.

The enzyme catalyses uridine(38/39/40) in tRNA = pseudouridine(38/39/40) in tRNA. Its function is as follows. Formation of pseudouridine at positions 38, 39 and 40 in the anticodon stem and loop of transfer RNAs. The chain is tRNA pseudouridine synthase A from Bifidobacterium longum (strain DJO10A).